A 245-amino-acid chain; its full sequence is Phosducin (245 aa).

A disordered region spans residues 1-70 (MEKAKSQSLE…DKDSKERFSR (70 aa)). Positions 1–244 (MEKAKSQSLE…LEQTNMEEDM (244 aa)) constitute a Phosducin domain. Basic and acidic residues-rich tracts occupy residues 28-50 (DWRKFKLESEDSDSVAHSKKEIL) and 58-69 (SRDDKDSKERFS). At S73 the chain carries Phosphoserine; by PKA. The thioredoxin fold stretch occupies residues 111–245 (YGFVYELESG…EQTNMEEDME (135 aa)).

It belongs to the phosducin family. Interacts with CRX. Forms a complex with the beta and gamma subunits of the GTP-binding protein, transducin. Post-translationally, light-induced changes in cyclic nucleotide levels modulate the phosphorylation of this protein by cAMP kinase.

The protein localises to the cytoplasm. It is found in the cytosol. It localises to the nucleus. The protein resides in the cell projection. Its subcellular location is the cilium. The protein localises to the photoreceptor outer segment. It is found in the photoreceptor inner segment. Functionally, inhibits the transcriptional activation activity of the cone-rod homeobox CRX. May participate in the regulation of visual phototransduction or in the integration of photoreceptor metabolism. This Bos taurus (Bovine) protein is Phosducin (PDC).